Reading from the N-terminus, the 90-residue chain is Progonadoliberin-3 (90 aa).

The first 23 residues, 1–23 (MEAGSRVIMQVLLLALVVQVTLS), serve as a signal peptide directing secretion. The residue at position 24 (Gln-24) is a Pyrrolidone carboxylic acid. Gly-33 bears the Glycine amide mark.

The protein belongs to the GnRH family. Expressed only in the terminal nerve nucleus of the telencephalon.

It is found in the secreted. Functionally, stimulates the secretion of gonadotropins. In Haplochromis burtoni (Burton's mouthbrooder), this protein is Progonadoliberin-3 (gnrh3).